Reading from the N-terminus, the 134-residue chain is Loki profilin-1 (134 aa).

Residues 55 to 62 form a loki loop region; that stretch reads LALGKKGI.

It belongs to the Asgard profilin family.

It localises to the cytoplasm. The protein localises to the cytoskeleton. With respect to regulation, inhibition of rabbit actin polymerization is reduced by phosphatidylinositol-(4,5)-P2(1,2-dipalmitoyl), a soluble form of the phospholipid phosphatidylinositol, suggesting an unknown lipid might regulate actin-profilin interaction in vivo. In terms of biological role, binds to actin and affects the structure of the cytoskeleton. At high concentrations inhibits spontaneous rabbit actin nucleation. This strongly suggests this archaea has a profilin-regulated actin system, and actin-type genes can be identified in this organism. This Lokiarchaeum sp. (strain GC14_75) protein is Loki profilin-1.